A 1245-amino-acid polypeptide reads, in one-letter code: Probable tail spike protein (1245 aa).

The 141-residue stretch at 1105-1245 (SDVHYKMDIV…EARLQALEEK (141 aa)) folds into the Peptidase S74 domain.

In terms of processing, proteolytic cleavage and release of the chaperone in the host cytosol stabilizes the folded protein. The cleavage gives rise to the mature tail spike protein but is not essential for catalytic activity.

The protein resides in the virion. Functionally, functions as a receptor binding protein (RBP) and probably mediates the attachment to the host capsular exopolysaccharides. Displays a depolymerase activity that specifically degrades the KN2-type polysaccharides of Klebsiella pneumoniae capsule. Its function is as follows. The C-terminal chaperone protein mediates homotrimerization and proper folding of the catalytic trimer. In Klebsiella (Taipeivirus 0507KN21), this protein is Probable tail spike protein.